A 183-amino-acid polypeptide reads, in one-letter code: Gamma-crystallin N (183 aa).

Beta/gamma crystallin 'Greek key' domains follow at residues 6 to 46 (GKII…RVET), 47 to 89 (GAWI…KPVR), 95 to 136 (YRLE…KVYG), and 138 to 180 (GAWV…RRVV).

It belongs to the beta/gamma-crystallin family. In terms of assembly, monomer.

In terms of biological role, crystallins are the dominant structural components of the vertebrate eye lens. This Xenopus tropicalis (Western clawed frog) protein is Gamma-crystallin N (crygn).